The following is a 526-amino-acid chain: Seipin-2 (526 aa).

The interval 33-77 (PIRSNSHQPSSLLRRRKSAHRRDLISSDIETEPSSSSDGFDVGEK) is disordered. Residues 58–70 (SSDIETEPSSSSD) are compositionally biased toward low complexity. The next 4 membrane-spanning stretches (helical) occupy residues 195 to 215 (SLLT…FDPF), 224 to 243 (FLMA…MNPF), 258 to 278 (FGWG…LLVS), and 483 to 503 (LFVW…LVCC).

Belongs to the seipin family. Expressed in seeds, seedlings, leaves, stems and roots. Not detected in flowers.

It is found in the endoplasmic reticulum membrane. In terms of biological role, involved in lipid metabolism and lipid droplet (LD) morphology, number, and size. Supports the formation of small-sized LDs and modulates triacylglycerol accumulation. Induces probably a reorganization of the endoplasmic reticulum into LD-forming domains. This is Seipin-2 from Arabidopsis thaliana (Mouse-ear cress).